The primary structure comprises 136 residues: Putative nickel-responsive regulator (136 aa).

4 residues coordinate Ni(2+): His76, His87, His89, and Cys95.

The protein belongs to the transcriptional regulatory CopG/NikR family. It depends on Ni(2+) as a cofactor.

Its function is as follows. Transcriptional regulator. This chain is Putative nickel-responsive regulator, found in Desulfotalea psychrophila (strain LSv54 / DSM 12343).